The chain runs to 653 residues: Fructose-1,6-bisphosphatase class 3 (653 aa).

It belongs to the FBPase class 3 family. Mn(2+) is required as a cofactor.

The enzyme catalyses beta-D-fructose 1,6-bisphosphate + H2O = beta-D-fructose 6-phosphate + phosphate. Its pathway is carbohydrate biosynthesis; gluconeogenesis. In Listeria monocytogenes serotype 4b (strain CLIP80459), this protein is Fructose-1,6-bisphosphatase class 3.